Consider the following 393-residue polypeptide: Formate-dependent phosphoribosylglycinamide formyltransferase (393 aa).

N(1)-(5-phospho-beta-D-ribosyl)glycinamide-binding positions include 22–23 and glutamate 82; that span reads EL. ATP contacts are provided by residues arginine 114, lysine 155, 160-165, 195-198, and glutamate 203; these read SSGHGQ and EGFI. The ATP-grasp domain occupies 119–308; the sequence is RLAAEELGLK…QFALHARAIL (190 aa). The Mg(2+) site is built by glutamate 267 and glutamate 279. N(1)-(5-phospho-beta-D-ribosyl)glycinamide contacts are provided by residues aspartate 286, lysine 356, and 363-364; that span reads RR.

Belongs to the PurK/PurT family. As to quaternary structure, homodimer.

It catalyses the reaction N(1)-(5-phospho-beta-D-ribosyl)glycinamide + formate + ATP = N(2)-formyl-N(1)-(5-phospho-beta-D-ribosyl)glycinamide + ADP + phosphate + H(+). It participates in purine metabolism; IMP biosynthesis via de novo pathway; N(2)-formyl-N(1)-(5-phospho-D-ribosyl)glycinamide from N(1)-(5-phospho-D-ribosyl)glycinamide (formate route): step 1/1. In terms of biological role, involved in the de novo purine biosynthesis. Catalyzes the transfer of formate to 5-phospho-ribosyl-glycinamide (GAR), producing 5-phospho-ribosyl-N-formylglycinamide (FGAR). Formate is provided by PurU via hydrolysis of 10-formyl-tetrahydrofolate. The sequence is that of Formate-dependent phosphoribosylglycinamide formyltransferase from Actinobacillus pleuropneumoniae serotype 3 (strain JL03).